Here is a 380-residue protein sequence, read N- to C-terminus: Bifunctional enzyme IspD/IspF (380 aa).

The segment at 1–224 is 2-C-methyl-D-erythritol 4-phosphate cytidylyltransferase; that stretch reads MTIPATYAAI…ERILGDAMDI (224 aa). The 2-C-methyl-D-erythritol 2,4-cyclodiphosphate synthase stretch occupies residues 225 to 380; the sequence is RLGNGFDVHA…SIATATLVKG (156 aa). Residues Asp-231 and His-233 each coordinate a divalent metal cation. 4-CDP-2-C-methyl-D-erythritol 2-phosphate contacts are provided by residues 231-233 and 257-258; these read DVH and HS. His-265 is an a divalent metal cation binding site. Residues 279–281, 355–358, Phe-362, and Arg-365 each bind 4-CDP-2-C-methyl-D-erythritol 2-phosphate; these read DIG and TTSE.

It in the N-terminal section; belongs to the IspD/TarI cytidylyltransferase family. IspD subfamily. This sequence in the C-terminal section; belongs to the IspF family. A divalent metal cation serves as cofactor.

It carries out the reaction 2-C-methyl-D-erythritol 4-phosphate + CTP + H(+) = 4-CDP-2-C-methyl-D-erythritol + diphosphate. The enzyme catalyses 4-CDP-2-C-methyl-D-erythritol 2-phosphate = 2-C-methyl-D-erythritol 2,4-cyclic diphosphate + CMP. The protein operates within isoprenoid biosynthesis; isopentenyl diphosphate biosynthesis via DXP pathway; isopentenyl diphosphate from 1-deoxy-D-xylulose 5-phosphate: step 2/6. Its pathway is isoprenoid biosynthesis; isopentenyl diphosphate biosynthesis via DXP pathway; isopentenyl diphosphate from 1-deoxy-D-xylulose 5-phosphate: step 4/6. Its function is as follows. Bifunctional enzyme that catalyzes the formation of 4-diphosphocytidyl-2-C-methyl-D-erythritol from CTP and 2-C-methyl-D-erythritol 4-phosphate (MEP) (IspD), and catalyzes the conversion of 4-diphosphocytidyl-2-C-methyl-D-erythritol 2-phosphate (CDP-ME2P) to 2-C-methyl-D-erythritol 2,4-cyclodiphosphate (ME-CPP) with a corresponding release of cytidine 5-monophosphate (CMP) (IspF). The polypeptide is Bifunctional enzyme IspD/IspF (Paracoccus denitrificans (strain Pd 1222)).